A 632-amino-acid polypeptide reads, in one-letter code: tRNA uridine 5-carboxymethylaminomethyl modification enzyme MnmG (632 aa).

FAD-binding positions include 15–20, I127, and S182; that span reads GAGHAG. NAD(+) is bound at residue 276-290; that stretch reads GPRYCPSIEDKIVRF. Q373 contributes to the FAD binding site.

This sequence belongs to the MnmG family. Homodimer. Heterotetramer of two MnmE and two MnmG subunits. It depends on FAD as a cofactor.

It localises to the cytoplasm. In terms of biological role, NAD-binding protein involved in the addition of a carboxymethylaminomethyl (cmnm) group at the wobble position (U34) of certain tRNAs, forming tRNA-cmnm(5)s(2)U34. The polypeptide is tRNA uridine 5-carboxymethylaminomethyl modification enzyme MnmG (Streptococcus pyogenes serotype M2 (strain MGAS10270)).